The primary structure comprises 371 residues: MELELDAGDQDLLAFLLEESGDLGTAPDEAVRAPLDWALPLSEVPSDWEVDDLLCSLLSPPASLNILSSSNPCLVHHDHTYSLPRETVSMDLESESCRKEGTQMTPQHMEELAEQEIARLVLTDEEKSLLEKEGLILPETLPLTKTEEQILKRVRRKIRNKRSAQESRRKKKVYVGGLESRVLKYTAQNMELQNKVQLLEEQNLSLLDQLRKLQAMVIEISNKTSSSSTCILVLLVSFCLLLVPAMYSSDTRGSLPAEHGVLSRQLRALPSEDPYQLELPALQSEVPKDSTHQWLDGSDCVLQAPGNTSCLLHYMPQAPSAEPPLEWPFPDLFSEPLCRGPILPLQANLTRKGGWLPTGSPSVILQDRYSG.

Positions 1–92 (MELELDAGDQ…LPRETVSMDL (92 aa)) are transcription activation (acidic). The Cytoplasmic portion of the chain corresponds to 1–230 (MELELDAGDQ…SNKTSSSSTC (230 aa)). 2 short sequence motifs (LXXLL motif) span residues 13-17 (LAFLL) and 54-58 (LCSLL). The short motif at 78–81 (DHTY) is the HCFC1-binding-motif (HBM) element. The bZIP domain occupies 150–213 (ILKRVRRKIR…LSLLDQLRKL (64 aa)). The basic motif stretch occupies residues 152–184 (KRVRRKIRNKRSAQESRRKKKVYVGGLESRVLK). The tract at residues 192 to 213 (LQNKVQLLEEQNLSLLDQLRKL) is leucine-zipper. Residues 231–247 (ILVLLVSFCLLLVPAMY) form a helical; Signal-anchor for type II membrane protein membrane-spanning segment. Residues 248-371 (SSDTRGSLPA…SVILQDRYSG (124 aa)) lie on the Lumenal side of the membrane. N-linked (GlcNAc...) asparagine glycans are attached at residues Asn-307 and Asn-348.

It belongs to the bZIP family. ATF subfamily. In terms of assembly, homodimer. Isoform 1 interacts with HCFC1; the interaction is required to stimulate CREB3 transcriptional activity. Isoform 1 interacts with CREBZF; the interaction occurs only in combination with HCFC1. Isoform 1 interacts (via central part and transmembrane region) with DCSTAMP (via C-terminus cytoplasmic domain). Isoform 1 interacts with OS9. Isoform 1 interacts (via leucine-zipper domain) with CREBRF (via leucine-zipper domain); the interaction occurs only after CREB3 activation and promotes CREB3 degradation. Isoform 1 interacts (via C-terminal domain) with CCR1. (Microbial infection) Interacts with the HCV core protein; homodimerization is prevented by the HCV core protein. Isoform 1 interacts (via leucine-zipper and transmembrane domains) with HIV-1 TMgp41 (via cytoplasmic domain); the interaction reduces CREB3 stability. Processed cyclic AMP-responsive element-binding protein 3 interacts with HIV-1 Tat. First proteolytically cleaved by site-1 protease (S1P) that generates membrane-associated N-terminus and a luminal C-terminus forms. The membrane-associated N-terminus form is further proteolytically processed probably by the site-2 protease (S2P) through a regulated intramembrane proteolysis (RIP), releasing the transcriptional active processed cyclic AMP-responsive element-binding protein 3 form, which is transported to the nucleus. The proteolytic cleavage is strongly induced during dendritic cell (DC) maturation and inhibited by DCSTAMP. That form is rapidly degraded. Post-translationally, N-glycosylated. As to expression, ubiquitously expressed. Expressed in dendritic cells (DC). Weakly expressed in monocytes (at protein level).

It localises to the endoplasmic reticulum membrane. The protein localises to the golgi apparatus. It is found in the cytoplasm. Its subcellular location is the nucleus. Functionally, endoplasmic reticulum (ER)-bound sequence-specific transcription factor that directly binds DNA and activates transcription. Plays a role in the unfolded protein response (UPR), promoting cell survival versus ER stress-induced apoptotic cell death. Also involved in cell proliferation, migration and differentiation, tumor suppression and inflammatory gene expression. Acts as a positive regulator of LKN-1/CCL15-induced chemotaxis signaling of leukocyte cell migration. Associates with chromatin to the HERPUD1 promoter. Also induces transcriptional activation of chemokine receptors. In terms of biological role, (Microbial infection) Plays a role in human immunodeficiency virus type 1 (HIV-1) virus protein expression. Its function is as follows. (Microbial infection) May play a role as a cellular tumor suppressor that is targeted by the hepatitis C virus (HCV) core protein. (Microbial infection) Plays a role in herpes simplex virus-1 (HSV-1) latent infection and reactivation from latency. Represses the VP16-mediated transactivation of immediate early genes of the HSV-1 virus by sequestering host cell factor-1 HCFC1 in the ER membrane of sensory neurons, thereby preventing the initiation of the replicative cascade leading to latent infection. Functionally, functions as a negative transcriptional regulator in ligand-induced transcriptional activation of the glucocorticoid receptor NR3C1 by recruiting and activating histone deacetylases (HDAC1, HDAC2 and HDAC6). Also decreases the acetylation level of histone H4. Does not promote the chemotactic activity of leukocyte cells. In terms of biological role, this is the transcriptionally active form that translocates to the nucleus and activates unfolded protein response (UPR) target genes during endoplasmic reticulum (ER) stress response. Binds the cAMP response element (CRE) (consensus: 5'-GTGACGT[AG][AG]-3') and C/EBP sequences present in many promoters to activate transcription of the genes. Binds to the unfolded protein response element (UPRE) consensus sequences sites. Binds DNA to the 5'-CCAC[GA]-3'half of ERSE II (5'-ATTGG-N-CCACG-3'). Its function is as follows. (Microbial infection) Activates transcription of genes required for reactivation of the latent HSV-1 virus. It's transcriptional activity is inhibited by CREBZF in a HCFC1-dependent manner, by the viral transactivator protein VP16. Binds DNA to the cAMP response element (CRE) (consensus: 5'-GTGACGT[AG][AG]-3') and C/EBP sequences present in many viral promoters. (Microbial infection) It's transcriptional activity is inhibited by CREBZF in a HCFC1-dependent manner, by the viral transactivator HCV core protein. This is Cyclic AMP-responsive element-binding protein 3 (CREB3) from Homo sapiens (Human).